Reading from the N-terminus, the 380-residue chain is 3-dehydroquinate synthase (380 aa).

NAD(+)-binding positions include 68 to 73 (PGEPNK), 102 to 106 (GTVLD), 126 to 127 (TT), lysine 139, and lysine 148. Glutamate 181, histidine 243, and histidine 259 together coordinate Zn(2+).

It belongs to the sugar phosphate cyclases superfamily. Dehydroquinate synthase family. It depends on NAD(+) as a cofactor. The cofactor is Co(2+). Requires Zn(2+) as cofactor.

The protein resides in the cytoplasm. The enzyme catalyses 7-phospho-2-dehydro-3-deoxy-D-arabino-heptonate = 3-dehydroquinate + phosphate. Its pathway is metabolic intermediate biosynthesis; chorismate biosynthesis; chorismate from D-erythrose 4-phosphate and phosphoenolpyruvate: step 2/7. Catalyzes the conversion of 3-deoxy-D-arabino-heptulosonate 7-phosphate (DAHP) to dehydroquinate (DHQ). The chain is 3-dehydroquinate synthase (aroB) from Chlamydia pneumoniae (Chlamydophila pneumoniae).